The chain runs to 44 residues: Photosystem I reaction center subunit IX (44 aa).

The helical transmembrane segment at 7-27 threads the bilayer; the sequence is YLSVAPVVSTLWFAALAGLLI.

Belongs to the PsaJ family.

It is found in the plastid. The protein localises to the chloroplast thylakoid membrane. In terms of biological role, may help in the organization of the PsaE and PsaF subunits. The sequence is that of Photosystem I reaction center subunit IX from Lotus japonicus (Lotus corniculatus var. japonicus).